We begin with the raw amino-acid sequence, 215 residues long: Thiamine-phosphate synthase (215 aa).

4-amino-2-methyl-5-(diphosphooxymethyl)pyrimidine contacts are provided by residues 42-46 (QYREK) and aspartate 77. Residues aspartate 78 and aspartate 97 each coordinate Mg(2+). Serine 116 contributes to the 4-amino-2-methyl-5-(diphosphooxymethyl)pyrimidine binding site. Residue 143–145 (TKS) coordinates 2-[(2R,5Z)-2-carboxy-4-methylthiazol-5(2H)-ylidene]ethyl phosphate. Lysine 146 is a binding site for 4-amino-2-methyl-5-(diphosphooxymethyl)pyrimidine. Residues glycine 174 and 194–195 (IS) contribute to the 2-[(2R,5Z)-2-carboxy-4-methylthiazol-5(2H)-ylidene]ethyl phosphate site.

The protein belongs to the thiamine-phosphate synthase family. Requires Mg(2+) as cofactor.

The catalysed reaction is 2-[(2R,5Z)-2-carboxy-4-methylthiazol-5(2H)-ylidene]ethyl phosphate + 4-amino-2-methyl-5-(diphosphooxymethyl)pyrimidine + 2 H(+) = thiamine phosphate + CO2 + diphosphate. It catalyses the reaction 2-(2-carboxy-4-methylthiazol-5-yl)ethyl phosphate + 4-amino-2-methyl-5-(diphosphooxymethyl)pyrimidine + 2 H(+) = thiamine phosphate + CO2 + diphosphate. It carries out the reaction 4-methyl-5-(2-phosphooxyethyl)-thiazole + 4-amino-2-methyl-5-(diphosphooxymethyl)pyrimidine + H(+) = thiamine phosphate + diphosphate. It functions in the pathway cofactor biosynthesis; thiamine diphosphate biosynthesis; thiamine phosphate from 4-amino-2-methyl-5-diphosphomethylpyrimidine and 4-methyl-5-(2-phosphoethyl)-thiazole: step 1/1. Functionally, condenses 4-methyl-5-(beta-hydroxyethyl)thiazole monophosphate (THZ-P) and 2-methyl-4-amino-5-hydroxymethyl pyrimidine pyrophosphate (HMP-PP) to form thiamine monophosphate (TMP). This Limosilactobacillus reuteri (strain DSM 20016) (Lactobacillus reuteri) protein is Thiamine-phosphate synthase.